Here is a 175-residue protein sequence, read N- to C-terminus: ATP-dependent protease subunit HslV (175 aa).

Threonine 2 is an active-site residue. Alanine 156, cysteine 159, and threonine 162 together coordinate Na(+).

Belongs to the peptidase T1B family. HslV subfamily. A double ring-shaped homohexamer of HslV is capped on each side by a ring-shaped HslU homohexamer. The assembly of the HslU/HslV complex is dependent on binding of ATP.

It localises to the cytoplasm. It carries out the reaction ATP-dependent cleavage of peptide bonds with broad specificity.. Allosterically activated by HslU binding. Functionally, protease subunit of a proteasome-like degradation complex believed to be a general protein degrading machinery. The protein is ATP-dependent protease subunit HslV of Rhizobium etli (strain CIAT 652).